The primary structure comprises 314 residues: Thymidylate synthase (314 aa).

DUMP-binding positions include arginine 21 and arginine 176–arginine 177. Cysteine 196 functions as the Nucleophile in the catalytic mechanism. Residues arginine 216–aspartate 219, asparagine 227, and histidine 257–tyrosine 259 each bind dUMP. Residue aspartate 219 coordinates (6R)-5,10-methylene-5,6,7,8-tetrahydrofolate. Residue serine 313 coordinates (6R)-5,10-methylene-5,6,7,8-tetrahydrofolate.

It belongs to the thymidylate synthase family. Bacterial-type ThyA subfamily. Homodimer.

It is found in the cytoplasm. It carries out the reaction dUMP + (6R)-5,10-methylene-5,6,7,8-tetrahydrofolate = 7,8-dihydrofolate + dTMP. It participates in pyrimidine metabolism; dTTP biosynthesis. Its function is as follows. Catalyzes the reductive methylation of 2'-deoxyuridine-5'-monophosphate (dUMP) to 2'-deoxythymidine-5'-monophosphate (dTMP) while utilizing 5,10-methylenetetrahydrofolate (mTHF) as the methyl donor and reductant in the reaction, yielding dihydrofolate (DHF) as a by-product. This enzymatic reaction provides an intracellular de novo source of dTMP, an essential precursor for DNA biosynthesis. This is Thymidylate synthase from Listeria monocytogenes serotype 4a (strain HCC23).